A 284-amino-acid chain; its full sequence is Tropomyosin (284 aa).

Residues 1–284 (MDAIKKKMQA…DMTFTELIGN (284 aa)) are a coiled coil.

This sequence belongs to the tropomyosin family. As to quaternary structure, homodimer.

Functionally, tropomyosin, in association with the troponin complex, plays a central role in the calcium dependent regulation of muscle contraction. This chain is Tropomyosin, found in Blattella germanica (German cockroach).